A 500-amino-acid chain; its full sequence is MDTLLKTPNNLEFLNPHHGFAVKASTFRSEKHHNFGSRKFCETLGRSVCVKGSSSALLELVPETKKENLDFELPMYDPSKGVVVDLAVVGGGPAGLAVAQQVSEAGLSVCSIDPNPKLIWPNNYGVWVDEFEAMDLLDCLDATWSGAAVYIDDNTAKDLHRPYGRVNRKQLKSKMMQKCIMNGVKFHQAKVIKVIHEESKSMLICNDGITIQATVVLDATGFSRSLVQYDKPYNPGYQVAYGILAEVEEHPFDVNKMVFMDWRDSHLKNNTDLKERNSRIPTFLYAMPFSSNRIFLEETSLVARPGLRIDDIQERMVARLNHLGIKVKSIEEDEHCLIPMGGPLPVLPQRVVGIGGTAGMVHPSTGYMVARTLAAAPVVANAIIQYLGSERSHSGNELSTAVWKDLWPIERRRQREFFCFGMDILLKLDLPATRRFFDAFFDLEPRYWHGFLSSRLFLPELIVFGLSLFSHASNTSRFEIMTKGTVPLVNMINNLLQDKE.

The transit peptide at 1–81 (MDTLLKTPNN…ELPMYDPSKG (81 aa)) directs the protein to the chloroplast. NAD(+) is bound at residue 86–114 (LAVVGGGPAGLAVAQQVSEAGLSVCSIDP).

It belongs to the lycopene cyclase family.

It localises to the plastid. Its subcellular location is the chloroplast. It catalyses the reaction a carotenoid psi-end group = a carotenoid beta-end derivative. Its pathway is carotenoid biosynthesis; beta-carotene biosynthesis. It participates in carotenoid biosynthesis; beta-zeacarotene biosynthesis. Functionally, catalyzes the double cyclization reaction which converts lycopene to beta-carotene and neurosporene to beta-zeacarotene. The sequence is that of Lycopene beta cyclase, chloroplastic (LCY1) from Solanum lycopersicum (Tomato).